The chain runs to 376 residues: UPF0754 membrane protein SE_1527 (376 aa).

2 helical membrane passes run 4-24 (ILLV…TNMI) and 356-376 (TLGF…AIFV).

The protein belongs to the UPF0754 family.

Its subcellular location is the cell membrane. In Staphylococcus epidermidis (strain ATCC 12228 / FDA PCI 1200), this protein is UPF0754 membrane protein SE_1527.